Reading from the N-terminus, the 91-residue chain is Small ribosomal subunit protein uS19 (91 aa).

This sequence belongs to the universal ribosomal protein uS19 family.

In terms of biological role, protein S19 forms a complex with S13 that binds strongly to the 16S ribosomal RNA. This Methylobacillus flagellatus (strain ATCC 51484 / DSM 6875 / VKM B-1610 / KT) protein is Small ribosomal subunit protein uS19.